The chain runs to 663 residues: DNA topoisomerase 4 subunit B (663 aa).

ATP contacts are provided by residues Y21, N61, D88, 130 to 136 (GLHGVGI), and K360. The Toprim domain maps to 440–554 (TELFIVEGDS…EGHLYLAKPP (115 aa)). Mg(2+)-binding residues include E446, D519, and D521.

Belongs to the type II topoisomerase family. ParE type 1 subfamily. As to quaternary structure, heterotetramer composed of ParC and ParE. The cofactor is Mg(2+). Requires Mn(2+) as cofactor. Ca(2+) serves as cofactor.

The catalysed reaction is ATP-dependent breakage, passage and rejoining of double-stranded DNA.. Functionally, topoisomerase IV is essential for chromosome segregation. It relaxes supercoiled DNA. Performs the decatenation events required during the replication of a circular DNA molecule. The chain is DNA topoisomerase 4 subunit B from Rickettsia typhi (strain ATCC VR-144 / Wilmington).